The following is an 89-amino-acid chain: Acylphosphatase (89 aa).

An Acylphosphatase-like domain is found at 3 to 89 (QKHLQVFGTV…SEDFSDFKSI (87 aa)). Residues Arg-18 and Asn-36 contribute to the active site.

Belongs to the acylphosphatase family.

It catalyses the reaction an acyl phosphate + H2O = a carboxylate + phosphate + H(+). The chain is Acylphosphatase (acyP) from Staphylococcus haemolyticus (strain JCSC1435).